A 701-amino-acid chain; its full sequence is Elongation factor G (701 aa).

In terms of domain architecture, tr-type G spans 8–290; sequence KRYRNIGICA…AVIEFLPAPD (283 aa). Residues 17-24, 88-92, and 142-145 contribute to the GTP site; these read AHVDAGKT, DTPGH, and NKMD.

It belongs to the TRAFAC class translation factor GTPase superfamily. Classic translation factor GTPase family. EF-G/EF-2 subfamily.

It localises to the cytoplasm. Its function is as follows. Catalyzes the GTP-dependent ribosomal translocation step during translation elongation. During this step, the ribosome changes from the pre-translocational (PRE) to the post-translocational (POST) state as the newly formed A-site-bound peptidyl-tRNA and P-site-bound deacylated tRNA move to the P and E sites, respectively. Catalyzes the coordinated movement of the two tRNA molecules, the mRNA and conformational changes in the ribosome. The protein is Elongation factor G of Marinobacter nauticus (strain ATCC 700491 / DSM 11845 / VT8) (Marinobacter aquaeolei).